The following is a 224-amino-acid chain: Large ribosomal subunit protein uL3 (224 aa).

The tract at residues 132-153 (SQTKTHGTHEYQRHPGAIGQRK) is disordered.

The protein belongs to the universal ribosomal protein uL3 family. Part of the 50S ribosomal subunit. Forms a cluster with proteins L14 and L19.

Its function is as follows. One of the primary rRNA binding proteins, it binds directly near the 3'-end of the 23S rRNA, where it nucleates assembly of the 50S subunit. The chain is Large ribosomal subunit protein uL3 from Myxococcus xanthus (strain DK1622).